A 414-amino-acid chain; its full sequence is Serine/threonine transporter SstT (414 aa).

8 helical membrane-spanning segments follow: residues 16-36 (GSLV…AWIS), 46-66 (LGTL…LMLV), 84-104 (ILFL…VFSF), 143-163 (ALLN…GFAL), 180-200 (AVTF…FGLV), 219-239 (LVVL…LLVF), 300-320 (MAGA…TLGV), and 332-352 (VVAS…LLLI).

The protein belongs to the dicarboxylate/amino acid:cation symporter (DAACS) (TC 2.A.23) family.

Its subcellular location is the cell inner membrane. The enzyme catalyses L-serine(in) + Na(+)(in) = L-serine(out) + Na(+)(out). The catalysed reaction is L-threonine(in) + Na(+)(in) = L-threonine(out) + Na(+)(out). Functionally, involved in the import of serine and threonine into the cell, with the concomitant import of sodium (symport system). This chain is Serine/threonine transporter SstT, found in Salmonella schwarzengrund (strain CVM19633).